Here is a 163-residue protein sequence, read N- to C-terminus: Glutathione peroxidase 1 (163 aa).

The active site involves Cys-36.

This sequence belongs to the glutathione peroxidase family.

It localises to the cytoplasm. It catalyses the reaction 2 glutathione + H2O2 = glutathione disulfide + 2 H2O. Its function is as follows. May constitute a glutathione peroxidase-like protective system against oxidative stresses. This is Glutathione peroxidase 1 (gpx-1) from Caenorhabditis elegans.